The following is a 378-amino-acid chain: Putative zinc finger protein C09F5.3 (378 aa).

Positions 1 to 14 (MRKTEKMKRPHNSS) are enriched in basic residues. Disordered stretches follow at residues 1-36 (MRKT…SKSI) and 61-80 (TLSE…NSAP). Basic and acidic residues-rich tracts occupy residues 16-26 (VKQEERADDSH) and 62-71 (LSEHVPEKKP). The C2H2-type 1 zinc finger occupies 42 to 65 (LKCELCSTVCSSISQLQSHTLSEH). Residues 85-107 (VACQQCEDTFEDFAQFAIHMKSH) form a C2H2-type 2; degenerate zinc finger. Residues 204-226 (YGCALCATSYPSQLHLITHVQMS) form a C2H2-type 3; degenerate zinc finger. The segment at 231-250 (TFYPPSLPIPTPPSPKSTPK) is disordered. A compositionally biased stretch (pro residues) spans 235–246 (PSLPIPTPPSPK). C2H2-type zinc fingers lie at residues 254–277 (LQCS…LRKH), 284–306 (DKCA…CLRH), 312–334 (HHCP…CAYH), and 355–377 (FVCP…TKIH).

The protein localises to the nucleus. This Caenorhabditis elegans protein is Putative zinc finger protein C09F5.3.